The following is a 152-amino-acid chain: Transcriptional regulator MraZ (152 aa).

SpoVT-AbrB domains lie at 5–52 (ATLV…TLPE) and 81–124 (ASEC…DEQV).

The protein belongs to the MraZ family. Forms oligomers.

Its subcellular location is the cytoplasm. The protein localises to the nucleoid. In terms of biological role, negatively regulates its own expression and that of the subsequent genes in the proximal part of the division and cell wall (dcw) gene cluster. Acts by binding directly to DNA. May also regulate the expression of genes outside the dcw cluster. This chain is Transcriptional regulator MraZ, found in Proteus mirabilis (strain HI4320).